Here is a 351-residue protein sequence, read N- to C-terminus: ATP-dependent 6-phosphofructokinase subunit gamma (351 aa).

As to quaternary structure, heterododecamer of 4 alpha, 4 beta and 4 gamma chains. The gamma chain bridges the N-terminal halves of the alpha and beta subunits.

The protein resides in the cytoplasm. It functions in the pathway carbohydrate degradation; glycolysis; D-glyceraldehyde 3-phosphate and glycerone phosphate from D-glucose: step 3/4. Functionally, structural subunit of pyrophosphate--fructose 6-phosphate 1-phosphotransferase. Not required for catalytic activity. Fine-tunes allosteric regulation of the ATP-PFK by ATP, fructose 2,6-bisphosphate and AMP. The chain is ATP-dependent 6-phosphofructokinase subunit gamma (PFK3) from Komagataella phaffii (strain GS115 / ATCC 20864) (Yeast).